Consider the following 346-residue polypeptide: UDP-3-O-acylglucosamine N-acyltransferase (346 aa).

Catalysis depends on His253, which acts as the Proton acceptor.

It belongs to the transferase hexapeptide repeat family. LpxD subfamily. In terms of assembly, homotrimer.

It catalyses the reaction a UDP-3-O-[(3R)-3-hydroxyacyl]-alpha-D-glucosamine + a (3R)-hydroxyacyl-[ACP] = a UDP-2-N,3-O-bis[(3R)-3-hydroxyacyl]-alpha-D-glucosamine + holo-[ACP] + H(+). It functions in the pathway bacterial outer membrane biogenesis; LPS lipid A biosynthesis. Catalyzes the N-acylation of UDP-3-O-acylglucosamine using 3-hydroxyacyl-ACP as the acyl donor. Is involved in the biosynthesis of lipid A, a phosphorylated glycolipid that anchors the lipopolysaccharide to the outer membrane of the cell. In Rickettsia conorii (strain ATCC VR-613 / Malish 7), this protein is UDP-3-O-acylglucosamine N-acyltransferase.